We begin with the raw amino-acid sequence, 537 residues long: O-phosphoserine--tRNA(Cys) ligase (537 aa).

Residues 186–188 (HMT), 231–233 (SAS), 273–274 (YY), and asparagine 317 contribute to the substrate site.

The protein belongs to the class-II aminoacyl-tRNA synthetase family. O-phosphoseryl-tRNA(Cys) synthetase subfamily. As to quaternary structure, homotetramer. Interacts with SepCysS.

It carries out the reaction tRNA(Cys) + O-phospho-L-serine + ATP = O-phospho-L-seryl-tRNA(Cys) + AMP + diphosphate. In terms of biological role, catalyzes the attachment of O-phosphoserine (Sep) to tRNA(Cys). This is O-phosphoserine--tRNA(Cys) ligase from Methanococcus vannielii (strain ATCC 35089 / DSM 1224 / JCM 13029 / OCM 148 / SB).